Here is a 376-residue protein sequence, read N- to C-terminus: Succinyl-diaminopimelate desuccinylase (376 aa).

A Zn(2+)-binding site is contributed by His74. Asp76 is a catalytic residue. Zn(2+) is bound at residue Asp105. The active-site Proton acceptor is the Glu135. 3 residues coordinate Zn(2+): Glu136, Glu164, and His349.

It belongs to the peptidase M20A family. DapE subfamily. In terms of assembly, homodimer. Requires Zn(2+) as cofactor. The cofactor is Co(2+).

The catalysed reaction is N-succinyl-(2S,6S)-2,6-diaminopimelate + H2O = (2S,6S)-2,6-diaminopimelate + succinate. It functions in the pathway amino-acid biosynthesis; L-lysine biosynthesis via DAP pathway; LL-2,6-diaminopimelate from (S)-tetrahydrodipicolinate (succinylase route): step 3/3. Its function is as follows. Catalyzes the hydrolysis of N-succinyl-L,L-diaminopimelic acid (SDAP), forming succinate and LL-2,6-diaminopimelate (DAP), an intermediate involved in the bacterial biosynthesis of lysine and meso-diaminopimelic acid, an essential component of bacterial cell walls. The chain is Succinyl-diaminopimelate desuccinylase from Zymomonas mobilis subsp. mobilis (strain ATCC 31821 / ZM4 / CP4).